The primary structure comprises 142 residues: UPF0102 protein Bcep18194_A3391 (142 aa).

The disordered stretch occupies residues 1–27; sequence MCHAAPARPGDGRGLPRAGDNFSGAAR.

It belongs to the UPF0102 family.

The sequence is that of UPF0102 protein Bcep18194_A3391 from Burkholderia lata (strain ATCC 17760 / DSM 23089 / LMG 22485 / NCIMB 9086 / R18194 / 383).